We begin with the raw amino-acid sequence, 100 residues long: Putative protein adenylyltransferase MJ0604 (100 aa).

The short motif at glycine 29–aspartate 43 is the GSX(10)DXD motif element. Residues aspartate 41 and aspartate 43 each contribute to the Mg(2+) site.

It belongs to the MntA antitoxin family. Mg(2+) serves as cofactor.

The catalysed reaction is L-tyrosyl-[protein] + ATP = O-(5'-adenylyl)-L-tyrosyl-[protein] + diphosphate. It catalyses the reaction O-(5'-adenylyl)-L-tyrosyl-[protein] + ATP = O-[5'-(adenylyl-(5'-&gt;3')-adenylyl)]-L-tyrosyl-[protein] + diphosphate. Its function is as follows. Putative antitoxin component of a putative type VII toxin-antitoxin (TA) system. Its cognate toxin might be MJ0605, which it might AMPylate. This chain is Putative protein adenylyltransferase MJ0604, found in Methanocaldococcus jannaschii (strain ATCC 43067 / DSM 2661 / JAL-1 / JCM 10045 / NBRC 100440) (Methanococcus jannaschii).